The chain runs to 432 residues: Glutamate-1-semialdehyde 2,1-aminomutase 2 (432 aa).

K268 carries the N6-(pyridoxal phosphate)lysine modification.

Belongs to the class-III pyridoxal-phosphate-dependent aminotransferase family. HemL subfamily. As to quaternary structure, homodimer. Requires pyridoxal 5'-phosphate as cofactor.

It is found in the cytoplasm. It carries out the reaction (S)-4-amino-5-oxopentanoate = 5-aminolevulinate. It participates in porphyrin-containing compound metabolism; protoporphyrin-IX biosynthesis; 5-aminolevulinate from L-glutamyl-tRNA(Glu): step 2/2. The protein is Glutamate-1-semialdehyde 2,1-aminomutase 2 of Listeria welshimeri serovar 6b (strain ATCC 35897 / DSM 20650 / CCUG 15529 / CIP 8149 / NCTC 11857 / SLCC 5334 / V8).